The following is a 332-amino-acid chain: Probable cation efflux system protein MT2084 (332 aa).

A run of 5 helical transmembrane segments spans residues 46–66 (ISLL…VMSG), 75–95 (IHNF…ALGA), 113–133 (AGSF…YEAI), 145–165 (VGWV…VALY), and 202–222 (VALG…AAIL).

The protein belongs to the cation diffusion facilitator (CDF) transporter (TC 2.A.4) family.

Its subcellular location is the cell membrane. The sequence is that of Probable cation efflux system protein MT2084 from Mycobacterium tuberculosis (strain CDC 1551 / Oshkosh).